The primary structure comprises 315 residues: DNA-directed RNA polymerase subunit alpha (315 aa).

Positions 1 to 228 (MIEMEKPKVE…EHLNLFITLK (228 aa)) are alpha N-terminal domain (alpha-NTD). An alpha C-terminal domain (alpha-CTD) region spans residues 245-315 (KEKVLEMTIE…LGLGLRPSDE (71 aa)).

It belongs to the RNA polymerase alpha chain family. As to quaternary structure, homodimer. The RNAP catalytic core consists of 2 alpha, 1 beta, 1 beta' and 1 omega subunit. When a sigma factor is associated with the core the holoenzyme is formed, which can initiate transcription.

The enzyme catalyses RNA(n) + a ribonucleoside 5'-triphosphate = RNA(n+1) + diphosphate. In terms of biological role, DNA-dependent RNA polymerase catalyzes the transcription of DNA into RNA using the four ribonucleoside triphosphates as substrates. The chain is DNA-directed RNA polymerase subunit alpha from Alkaliphilus metalliredigens (strain QYMF).